Reading from the N-terminus, the 63-residue chain is Cecropin-B (63 aa).

Positions 1-22 (MNFNKIFVFVALILAISLGNTE) are cleaved as a signal peptide. Arg62 carries the post-translational modification Arginine amide.

Belongs to the cecropin family.

It is found in the secreted. Functionally, cecropins have lytic and antibacterial activity against several Gram-positive and Gram-negative bacteria. In Drosophila simulans (Fruit fly), this protein is Cecropin-B (CecB).